The sequence spans 576 residues: Proline--tRNA ligase (576 aa).

Belongs to the class-II aminoacyl-tRNA synthetase family. ProS type 1 subfamily. As to quaternary structure, homodimer.

The protein resides in the cytoplasm. It catalyses the reaction tRNA(Pro) + L-proline + ATP = L-prolyl-tRNA(Pro) + AMP + diphosphate. Functionally, catalyzes the attachment of proline to tRNA(Pro) in a two-step reaction: proline is first activated by ATP to form Pro-AMP and then transferred to the acceptor end of tRNA(Pro). As ProRS can inadvertently accommodate and process non-cognate amino acids such as alanine and cysteine, to avoid such errors it has two additional distinct editing activities against alanine. One activity is designated as 'pretransfer' editing and involves the tRNA(Pro)-independent hydrolysis of activated Ala-AMP. The other activity is designated 'posttransfer' editing and involves deacylation of mischarged Ala-tRNA(Pro). The misacylated Cys-tRNA(Pro) is not edited by ProRS. The sequence is that of Proline--tRNA ligase from Pelobacter propionicus (strain DSM 2379 / NBRC 103807 / OttBd1).